The primary structure comprises 425 residues: MLLKNCKILKNTKFEKVDILIRDNKIEKISENIDITDENIIDIKNRFVTAGFIDVHVHWREPGFSKKETVYTASRAAARGGFTTVMTMPNLNPVPDSVETLNKQLEIIKKDSVIRAIPYGAITKEEYGRELSDMEAIASNVFAFTDDGRGVQSANVMYEAMLMGAKLNKAIVAHCEDNSLIRGGAMHEGKRSAELGIKGIPSICESTQIVRDVLLAEAANCHYHVCHISAKESVRAVREGKKNGIKVTCEVTPHHLLSCDEDIKEDNGMWKMNPPLRSREDRNALIVGILDGTIDIIATDHAPHTMEEKIRGIEKSSFGIVGSETAFAQLYTKFVKTDIFSLEMLVKLMSENVAKIFDLPYGKLEENSFADIVVIDLEKEITINPNNFLSKGKNTPYINEKINGIPVLTISNGKIAYIDKEEINL.

Zn(2+) contacts are provided by H56 and H58. Substrate is bound by residues 58–60 (HWR) and N90. Zn(2+)-binding residues include D147, H174, and H227. N273 lines the substrate pocket. Position 300 (D300) interacts with Zn(2+). D300 is a catalytic residue. Residues H304 and 318 to 319 (FG) contribute to the substrate site.

Belongs to the metallo-dependent hydrolases superfamily. DHOase family. Class I DHOase subfamily. The cofactor is Zn(2+).

The catalysed reaction is (S)-dihydroorotate + H2O = N-carbamoyl-L-aspartate + H(+). It participates in pyrimidine metabolism; UMP biosynthesis via de novo pathway; (S)-dihydroorotate from bicarbonate: step 3/3. Catalyzes the reversible cyclization of carbamoyl aspartate to dihydroorotate. The polypeptide is Dihydroorotase (Fusobacterium nucleatum subsp. nucleatum (strain ATCC 25586 / DSM 15643 / BCRC 10681 / CIP 101130 / JCM 8532 / KCTC 2640 / LMG 13131 / VPI 4355)).